Consider the following 357-residue polypeptide: uncharacterized protein (357 aa).

The segment at 120 to 145 (SSSTVNHDQPAEQPSDKSTDDSTGYP) is disordered.

This is an uncharacterized protein from Caenorhabditis elegans.